Reading from the N-terminus, the 497-residue chain is Glycerol kinase (497 aa).

Thr12 lines the ADP pocket. Positions 12, 13, and 14 each coordinate ATP. Thr12 provides a ligand contact to sn-glycerol 3-phosphate. Arg16 provides a ligand contact to ADP. Sn-glycerol 3-phosphate is bound by residues Arg82, Glu83, Tyr134, and Asp243. The glycerol site is built by Arg82, Glu83, Tyr134, Asp243, and Gln244. Thr265 and Gly308 together coordinate ADP. ATP-binding residues include Thr265, Gly308, Gln312, and Gly409. Gly409 and Asn413 together coordinate ADP.

It belongs to the FGGY kinase family. In terms of assembly, homotetramer and homodimer (in equilibrium).

It catalyses the reaction glycerol + ATP = sn-glycerol 3-phosphate + ADP + H(+). It participates in polyol metabolism; glycerol degradation via glycerol kinase pathway; sn-glycerol 3-phosphate from glycerol: step 1/1. Its activity is regulated as follows. Activated by phosphorylation and inhibited by fructose 1,6-bisphosphate (FBP). In terms of biological role, key enzyme in the regulation of glycerol uptake and metabolism. Catalyzes the phosphorylation of glycerol to yield sn-glycerol 3-phosphate. This is Glycerol kinase from Caldanaerobacter subterraneus subsp. tengcongensis (strain DSM 15242 / JCM 11007 / NBRC 100824 / MB4) (Thermoanaerobacter tengcongensis).